A 757-amino-acid polypeptide reads, in one-letter code: MRFNQYSYINFPKENVLSELKKCGFDLQNTANHKDSLETFLRRFFFTYQDTNYPLSILAADKKTDLLTFFQSEDELTADIFYTVAFQLLGFSYLVDFEDSDVFRKETGFPIIYGDLIENLYQLLNTRTKKGNTLIDQLVSDGLIPEDNDYHYFNGKSLATFSNQDVIREVVYVESRVDTDQKGLSDLVKVSIIRPRFDGKIPAIMTASPYHQGTNDKASDKALYKMEGELEVKLPHKIELEKPQLNLVQPQGKAELIAEAEEKLTHINSSYTLNDYFLPRGFANLYVSGVGTKDSTGFMTNGDYQQIEAYKNVIDWLNGRCRAFTDHTRQRQVKADWSNGKVATTGLSYLGTMSNGLATTGVDGLEVIIAEAGISSWYNYYRENGLVTSPGGYPGEDFDSLAELTYSRNLLAGDYIRGNEAHQADLEKVKAQLDRKTGDYNQFWHDRNYLLNAHKVKAEVVFTHGSQDWNVKPLHVYQMFHALPTHIHKHLFFHNGAHVYMNNWQSIDFRESINALLTKKLLGQETDFQLPTVIWQDNTAPQTWLSLDNFGGQENCETFSLGQEEQAIQNQYPDKDFERYGKTYQTFNTELYQGKANQITINLPVTKDLHLNGRAQLNLRIKSSTNKGLLSAQLLEFGQKKYLQPYPAILSARTIDNGRYHMLENLCELPFRPEAQRVVTKGYLNLQNRNDLLLVEDITADEWMDVQFELQPTIYKLKEGDTLRLVLYTTDFEITIRDNTDYHLTVDLAQSMLTLPC.

Residues Ser348, Asp468, and His498 each act as charge relay system in the active site.

The protein belongs to the peptidase S15 family. Homodimer.

It is found in the cytoplasm. The enzyme catalyses Hydrolyzes Xaa-Pro-|- bonds to release unblocked, N-terminal dipeptides from substrates including Ala-Pro-|-p-nitroanilide and (sequentially) Tyr-Pro-|-Phe-Pro-|-Gly-Pro-|-Ile.. In terms of biological role, removes N-terminal dipeptides sequentially from polypeptides having unsubstituted N-termini provided that the penultimate residue is proline. The protein is Xaa-Pro dipeptidyl-peptidase of Streptococcus pneumoniae serotype 19F (strain G54).